Reading from the N-terminus, the 314-residue chain is DNA-directed RNA polymerase subunit alpha (314 aa).

Positions 1-228 (MIEIEKPRIE…EHLNIFVGLT (228 aa)) are alpha N-terminal domain (alpha-NTD). Residues 245-314 (KEKVLEMSIE…DLGLGLRKED (70 aa)) form an alpha C-terminal domain (alpha-CTD) region.

The protein belongs to the RNA polymerase alpha chain family. As to quaternary structure, homodimer. The RNAP catalytic core consists of 2 alpha, 1 beta, 1 beta' and 1 omega subunit. When a sigma factor is associated with the core the holoenzyme is formed, which can initiate transcription.

The enzyme catalyses RNA(n) + a ribonucleoside 5'-triphosphate = RNA(n+1) + diphosphate. In terms of biological role, DNA-dependent RNA polymerase catalyzes the transcription of DNA into RNA using the four ribonucleoside triphosphates as substrates. This is DNA-directed RNA polymerase subunit alpha from Staphylococcus saprophyticus subsp. saprophyticus (strain ATCC 15305 / DSM 20229 / NCIMB 8711 / NCTC 7292 / S-41).